The chain runs to 231 residues: Adenylate kinase (231 aa).

12–17 (GAGKGT) contributes to the ATP binding site. Residues 32 to 61 (STGDMLRAAVKAKTPLGLEVKKIMESGGLV) are NMP. AMP contacts are provided by residues threonine 33, arginine 38, 59–61 (GLV), 87–90 (GFPR), and glutamine 94. The segment at 124–161 (GRLIHPASGRTYHRRYNPPKVADKDDVTGEPLIQRADD) is LID. Residues arginine 125 and 134–135 (TY) each bind ATP. The AMP site is built by arginine 158 and arginine 169. Glycine 205 contributes to the ATP binding site.

This sequence belongs to the adenylate kinase family. As to quaternary structure, monomer.

It is found in the cytoplasm. It carries out the reaction AMP + ATP = 2 ADP. The protein operates within purine metabolism; AMP biosynthesis via salvage pathway; AMP from ADP: step 1/1. Its function is as follows. Catalyzes the reversible transfer of the terminal phosphate group between ATP and AMP. Plays an important role in cellular energy homeostasis and in adenine nucleotide metabolism. The polypeptide is Adenylate kinase (Coxiella burnetii (strain CbuK_Q154) (Coxiella burnetii (strain Q154))).